Here is a 148-residue protein sequence, read N- to C-terminus: Lysozyme C (148 aa).

Positions 1-18 (MKALIILGLVLLSVMVQA) are cleaved as a signal peptide. The region spanning 19-148 (KVFERCELAR…LRQYIQGCGV (130 aa)) is the C-type lysozyme domain. Cystine bridges form between cysteine 24–cysteine 146, cysteine 48–cysteine 134, cysteine 83–cysteine 99, and cysteine 95–cysteine 113. Active-site residues include glutamate 53 and aspartate 71.

It belongs to the glycosyl hydrolase 22 family. As to quaternary structure, monomer.

Its subcellular location is the secreted. The enzyme catalyses Hydrolysis of (1-&gt;4)-beta-linkages between N-acetylmuramic acid and N-acetyl-D-glucosamine residues in a peptidoglycan and between N-acetyl-D-glucosamine residues in chitodextrins.. Functionally, lysozymes have primarily a bacteriolytic function; those in tissues and body fluids are associated with the monocyte-macrophage system and enhance the activity of immunoagents. The chain is Lysozyme C (LYZ) from Hylobates lar (Lar gibbon).